Consider the following 202-residue polypeptide: MRNVSMTQRISEVVRNTNETKIRVRLNLDGTGQGTLNTGVPFLDHMIDQIKQHGLFDIDIHCDGDLEIDDHHTVEDCGITLGQAFAQALGDKKGLRRYGHFYAPLDEALSRVVVDLSGRPGLFMDIPFTRARIGTFDVDLFSEFFQGFVNHALMTLHIDNLKGKNSHHQIESVFKALARALRMACEIDPRAENTIASTKGSL.

This sequence belongs to the imidazoleglycerol-phosphate dehydratase family.

It localises to the cytoplasm. The catalysed reaction is D-erythro-1-(imidazol-4-yl)glycerol 3-phosphate = 3-(imidazol-4-yl)-2-oxopropyl phosphate + H2O. It functions in the pathway amino-acid biosynthesis; L-histidine biosynthesis; L-histidine from 5-phospho-alpha-D-ribose 1-diphosphate: step 6/9. The chain is Imidazoleglycerol-phosphate dehydratase from Acinetobacter baumannii (strain SDF).